A 503-amino-acid chain; its full sequence is Probable mitochondrial-processing peptidase subunit alpha-1, mitochondrial (503 aa).

A mitochondrion-targeting transit peptide spans 1 to 59 (MYRTAASRARALKGVLTRSLRPARYASSSAVAETSSSTPAYLSWLSGGSRAALTSLDMP).

Belongs to the peptidase M16 family. As to quaternary structure, heterodimer of alpha and beta subunits, forming the mitochondrial processing protease (MPP) in which subunit alpha is involved in substrate recognition and binding and subunit beta is the catalytic subunit. Component of the ubiquinol-cytochrome c oxidoreductase (cytochrome b-c1 complex, complex III, CIII), a multisubunit enzyme composed of 10 subunits. The complex is composed of 3 respiratory subunits cytochrome b (MT-CYB), cytochrome c1 (CYC1-1 or CYC1-2) and Rieske protein (UCR1-1 or UCR1-2), 2 core protein subunits MPPalpha1 (or MPPalpha2) and MPPB, and 5 low-molecular weight protein subunits QCR7-1 (or QCR7-2), UCRQ-1 (or UCRQ-2), QCR9, UCRY and probably QCR6-1 (or QCR6-2). The complex exists as an obligatory dimer and forms supercomplexes (SCs) in the inner mitochondrial membrane with NADH-ubiquinone oxidoreductase (complex I, CI), resulting in different assemblies (supercomplexes SCI(1)III(2) and SCI(2)III(4)).

The protein localises to the mitochondrion matrix. Its subcellular location is the mitochondrion inner membrane. Substrate recognition and binding subunit of the essential mitochondrial processing protease (MPP), which cleaves the mitochondrial sequence off newly imported precursors proteins. Functionally, component of the ubiquinol-cytochrome c oxidoreductase, a multisubunit transmembrane complex that is part of the mitochondrial electron transport chain which drives oxidative phosphorylation. The respiratory chain contains 3 multisubunit complexes succinate dehydrogenase (complex II, CII), ubiquinol-cytochrome c oxidoreductase (cytochrome b-c1 complex, complex III, CIII) and cytochrome c oxidase (complex IV, CIV), that cooperate to transfer electrons derived from NADH and succinate to molecular oxygen, creating an electrochemical gradient over the inner membrane that drives transmembrane transport and the ATP synthase. The cytochrome b-c1 complex catalyzes electron transfer from ubiquinol to cytochrome c, linking this redox reaction to translocation of protons across the mitochondrial inner membrane, with protons being carried across the membrane as hydrogens on the quinol. In the process called Q cycle, 2 protons are consumed from the matrix, 4 protons are released into the intermembrane space and 2 electrons are passed to cytochrome c. The polypeptide is Probable mitochondrial-processing peptidase subunit alpha-1, mitochondrial (MPPalpha1) (Arabidopsis thaliana (Mouse-ear cress)).